We begin with the raw amino-acid sequence, 504 residues long: MXXXXGYLEFDGAQQQSFLYPLFFREYIYVLAYDHGLNRLNRNRSIFLENADYDKRYSSLIVKRLILRMSEQNRLITSTKDFSQNPFLGHTHLFYYQMISVLFAVIVEIPFSLRLGSSFEGKKLKKSYNLQSIHSIFPFLEDKLSHFNYVLDVLIPYPIHLEILVQTLRYRVKDASSLHFFRFCLYEYCSWKNFDIKKKSIFNPRFFLFLYNSHVCEYESIFFFLRKRSSHLRSTSYEVLFERIFFYGKIQHFFKVFVNNFPAILGLLKDPFIHYVRYRGKCILATKDTPLLMNKWKYYFVNLWQCYFSIWFQPQKANINQLYKANLEFLGYMSSLRLNPLVVRSQMLENSFLIDNVRIKLDSKIPISSIIGSLAKDKFCNVLGHPISKANWTDSSDSDILNRFVRICRNISHYYSGSSKKKILYRIKYILRLCCVKTLARKHKSTVRAFLKRLGSGLLEEFLTGEDQVLSLIFPRSFYASKRFFRVRIWYLDILYLNDLVNHE.

It belongs to the intron maturase 2 family. MatK subfamily.

It is found in the plastid. Its subcellular location is the chloroplast. Functionally, usually encoded in the trnK tRNA gene intron. Probably assists in splicing its own and other chloroplast group II introns. The chain is Maturase K from Matthiola incana (Common stock).